The primary structure comprises 692 residues: Penicillin-binding protein activator LpoA (692 aa).

A signal peptide spans 1-26 (MLSSITVRTKSGRLIPLVLAATLLAA). The N-palmitoyl cysteine moiety is linked to residue Cys27. Residue Cys27 is the site of S-diacylglycerol cysteine attachment. Disordered regions lie at residues 297–316 (AAAA…AAAT) and 324–373 (VNAA…PDAH). Low complexity predominate over residues 332 to 363 (PSAQGTDAAAPAAPNDSAALPPLDAAGDPIAP).

This sequence belongs to the LpoA family. Interacts with PBP1a.

The protein resides in the cell outer membrane. Functionally, regulator of peptidoglycan synthesis that is essential for the function of penicillin-binding protein 1A (PBP1a). The protein is Penicillin-binding protein activator LpoA of Edwardsiella piscicida.